The following is a 134-amino-acid chain: DNA-directed RNA polymerase subunit omega (134 aa).

The disordered stretch occupies residues 76-102 (EVDEPEPDPASMIAAGGAAAADSEEQD).

This sequence belongs to the RNA polymerase subunit omega family. As to quaternary structure, the RNAP catalytic core consists of 2 alpha, 1 beta, 1 beta' and 1 omega subunit. When a sigma factor is associated with the core the holoenzyme is formed, which can initiate transcription.

It carries out the reaction RNA(n) + a ribonucleoside 5'-triphosphate = RNA(n+1) + diphosphate. Promotes RNA polymerase assembly. Latches the N- and C-terminal regions of the beta' subunit thereby facilitating its interaction with the beta and alpha subunits. This Rhizobium etli (strain ATCC 51251 / DSM 11541 / JCM 21823 / NBRC 15573 / CFN 42) protein is DNA-directed RNA polymerase subunit omega.